A 561-amino-acid chain; its full sequence is DNA ligase B (561 aa).

The active-site N6-AMP-lysine intermediate is lysine 125.

The protein belongs to the NAD-dependent DNA ligase family. LigB subfamily.

It catalyses the reaction NAD(+) + (deoxyribonucleotide)n-3'-hydroxyl + 5'-phospho-(deoxyribonucleotide)m = (deoxyribonucleotide)n+m + AMP + beta-nicotinamide D-nucleotide.. Catalyzes the formation of phosphodiester linkages between 5'-phosphoryl and 3'-hydroxyl groups in double-stranded DNA using NAD as a coenzyme and as the energy source for the reaction. The chain is DNA ligase B from Salmonella choleraesuis (strain SC-B67).